Here is a 130-residue protein sequence, read N- to C-terminus: Protein ApaG (130 aa).

The ApaG domain maps to 3–127 (KAETRGISVT…FSLDVPHVRR (125 aa)).

The protein is Protein ApaG of Methylobacterium sp. (strain 4-46).